The primary structure comprises 821 residues: MGKRLFWTALSGLMVSAAHAAPPAPLPAQQLDWQPWGDQAPNGALCSGRYVEPGYRLSAGDTPRQVRTDSATAAYGDGGATVLAGEVVLRRDDTQLEAPRVRVNAERDRAFAEGPTAVRYPGLLVRGGDASMALDGDAAQVDNAHYVIHEQRVRGDAIELQRLPDGRYRLDDASFTTCEPGNRLWRMVGSDVTLDRAEGFGTATHARLEMGDVPVFYWPWLRFPIDDRRQSGFLWPTLGFSGDGLDYTQPYYLNLAPNYDATLSPRWMSEHGTMLGGEFRYLFGSDQGTIEGAYLASDKGGASDNPNDPDDAFEDESRWYIDYRHAGRFSPRLDYQLAYGAASDGRYFDDFGRDFAEQDTDHLLRLARTTYRGDTWRLDARAQGYQKLDYPLDEDDKPFYRLPSLSADARWRQDSGFYQEWNSNATYFWRDLHGVDSQGRWTDEETGNRRTIPLREAANGSRLHLTPALGWRAEPSWGFLEPRAQLWQSSYQLDYGNRQTDRDENPSLVAPVLSMDSGLIFERDTSLFGSDWRQTLEPRLYYAYVPERDQSDFPDFDTSERAVSWGQLWSPYRFTGADRLGDVNKLSYGASTRFLEDDTGRERLSLSVGQSSYFSDRNIDMNGDPDTLPNKERNYQDWYNATRDRSPVITQLDWRISERWRSRYAWFYDADRSVTEKASAYLQYNDPAGHVLNLGYSWQLEGFEPADDAEDRLGYNREDYDVSFAYQATPSLDLIGRFLYDNTNDRAMEQLAGVQFNDCCSAVQLVWREWIEDNDTANTIDDDYTDRGVFLRFVFKGLGGVGQEADTYFEEAIPGYRATRF.

An N-terminal signal peptide occupies residues 1–20 (MGKRLFWTALSGLMVSAAHA).

The protein belongs to the LptD family. In terms of assembly, component of the lipopolysaccharide transport and assembly complex. Interacts with LptE and LptA.

The protein resides in the cell outer membrane. Together with LptE, is involved in the assembly of lipopolysaccharide (LPS) at the surface of the outer membrane. The chain is LPS-assembly protein LptD from Chromohalobacter salexigens (strain ATCC BAA-138 / DSM 3043 / CIP 106854 / NCIMB 13768 / 1H11).